Here is a 309-residue protein sequence, read N- to C-terminus: Ribosomal protein L11 methyltransferase (309 aa).

Residues threonine 152, glycine 178, aspartate 200, and asparagine 242 each contribute to the S-adenosyl-L-methionine site.

This sequence belongs to the methyltransferase superfamily. PrmA family.

The protein resides in the cytoplasm. The enzyme catalyses L-lysyl-[protein] + 3 S-adenosyl-L-methionine = N(6),N(6),N(6)-trimethyl-L-lysyl-[protein] + 3 S-adenosyl-L-homocysteine + 3 H(+). In terms of biological role, methylates ribosomal protein L11. The sequence is that of Ribosomal protein L11 methyltransferase from Pelobacter propionicus (strain DSM 2379 / NBRC 103807 / OttBd1).